Reading from the N-terminus, the 93-residue chain is Large ribosomal subunit protein eL29 (93 aa).

Over residues 1 to 31 (MAKSKNHSTHHKNRKDHRNGIKKAVVHKKTS) the composition is skewed to basic residues. The disordered stretch occupies residues 1 to 33 (MAKSKNHSTHHKNRKDHRNGIKKAVVHKKTSSK).

The protein belongs to the eukaryotic ribosomal protein eL29 family.

The polypeptide is Large ribosomal subunit protein eL29 (rpl29) (Dictyostelium discoideum (Social amoeba)).